A 290-amino-acid chain; its full sequence is Nucleotide-binding protein Clos_0574 (290 aa).

8 to 15 (GLSGAGKS) is an ATP binding site. 59 to 62 (DIRG) contributes to the GTP binding site.

It belongs to the RapZ-like family.

Displays ATPase and GTPase activities. This Alkaliphilus oremlandii (strain OhILAs) (Clostridium oremlandii (strain OhILAs)) protein is Nucleotide-binding protein Clos_0574.